Consider the following 183-residue polypeptide: Streptavidin-V2 (183 aa).

An N-terminal signal peptide occupies residues 1–24 (MRKIVVAAIAVSLTTVGITASASA). Residues 37 to 159 (AEAGITGTWY…GHDTFTKVKP (123 aa)) enclose the Avidin-like domain. Tyr-67 and Tyr-78 together coordinate biotin. The short motif at 83–85 (RYD) is the Cell attachment site; atypical element. Residues Trp-116, Trp-132, and Trp-144 each coordinate biotin.

This sequence belongs to the avidin/streptavidin family. In terms of assembly, homotetramer.

Its subcellular location is the secreted. Functionally, the biological function of streptavidin is not known. Forms a strong non-covalent specific complex with biotin (one molecule of biotin per subunit of streptavidin). The chain is Streptavidin-V2 from Streptomyces violaceus (Streptomyces venezuelae).